The primary structure comprises 250 residues: Membrane-spanning 4-domains subfamily A member 8 (250 aa).

The Cytoplasmic segment spans residues 1 to 74; the sequence is MNSMTSAVPV…ALKEGKTLGA (74 aa). A helical membrane pass occupies residues 75-95; the sequence is IQIIIGLAHIGLGSIMATVLV. Topologically, residues 96–98 are extracellular; sequence GEY. Residues 99-119 form a helical membrane-spanning segment; that stretch reads LSISFYGGFPFWGGLWFIISG. Residues 120–136 are Cytoplasmic-facing; sequence SLSVAAENQPYSYCLLS. The chain crosses the membrane as a helical span at residues 137-157; the sequence is GSLGLNIVSAICSAVGVILFI. The Extracellular portion of the chain corresponds to 158–180; it reads TDLSIPHPYAYPDYYPYAWGVNP. A helical membrane pass occupies residues 181 to 201; it reads GMAISGVLLVFCLLEFGIACA. Residues 202 to 250 lie on the Cytoplasmic side of the membrane; the sequence is SSHFGCQLVCCQSSNVSVIYPNIYAANPVITPEPVTSPPSYSSEIQANK.

Belongs to the MS4A family. As to expression, expressed by hematopoietic tissues and cells lines.

It localises to the membrane. Its function is as follows. May be involved in signal transduction as a component of a multimeric receptor complex. In Homo sapiens (Human), this protein is Membrane-spanning 4-domains subfamily A member 8 (MS4A8).